The primary structure comprises 259 residues: UPF0246 protein PLES_14941 (259 aa).

The protein belongs to the UPF0246 family.

In Pseudomonas aeruginosa (strain LESB58), this protein is UPF0246 protein PLES_14941.